The chain runs to 917 residues: Translation initiation factor IF-2 (917 aa).

Residues 102–249 (EKSQAEEQAL…KWTAEPKAPE (148 aa)) show a composition bias toward basic and acidic residues. Positions 102-326 (EKSQAEEQAL…KSSTLQQGFH (225 aa)) are disordered. A compositionally biased stretch (basic residues) spans 279–293 (RRGRTAKAPRAKKNN). The segment covering 294-306 (RHSEKADREEARA) has biased composition (basic and acidic residues). A tr-type G domain is found at 416–585 (SRAPVVTIMG…LLQAEVLELK (170 aa)). The G1 stretch occupies residues 425 to 432 (GHVDHGKT). 425 to 432 (GHVDHGKT) is a GTP binding site. The tract at residues 450-454 (GITQH) is G2. Positions 471-474 (DTPG) are G3. GTP contacts are provided by residues 471–475 (DTPGH) and 525–528 (NKID). The interval 525-528 (NKID) is G4. The segment at 561–563 (SAK) is G5.

It belongs to the TRAFAC class translation factor GTPase superfamily. Classic translation factor GTPase family. IF-2 subfamily.

It localises to the cytoplasm. Its function is as follows. One of the essential components for the initiation of protein synthesis. Protects formylmethionyl-tRNA from spontaneous hydrolysis and promotes its binding to the 30S ribosomal subunits. Also involved in the hydrolysis of GTP during the formation of the 70S ribosomal complex. The sequence is that of Translation initiation factor IF-2 (infB) from Proteus vulgaris.